The primary structure comprises 238 residues: uncharacterized protein (238 aa).

An N-terminal signal peptide occupies residues 1–28 (MSRNSRGSGRYVFVVLACVFGYTRAVHA).

This is an uncharacterized protein from Treponema pallidum (strain Nichols).